We begin with the raw amino-acid sequence, 271 residues long: 4-diphosphocytidyl-2-C-methyl-D-erythritol kinase (271 aa).

Lys-17 is a catalytic residue. 97 to 107 (PVGSGLGGGSS) contributes to the ATP binding site. Asp-137 is a catalytic residue.

Belongs to the GHMP kinase family. IspE subfamily.

The enzyme catalyses 4-CDP-2-C-methyl-D-erythritol + ATP = 4-CDP-2-C-methyl-D-erythritol 2-phosphate + ADP + H(+). The protein operates within isoprenoid biosynthesis; isopentenyl diphosphate biosynthesis via DXP pathway; isopentenyl diphosphate from 1-deoxy-D-xylulose 5-phosphate: step 3/6. Its function is as follows. Catalyzes the phosphorylation of the position 2 hydroxy group of 4-diphosphocytidyl-2C-methyl-D-erythritol. The sequence is that of 4-diphosphocytidyl-2-C-methyl-D-erythritol kinase from Thermotoga petrophila (strain ATCC BAA-488 / DSM 13995 / JCM 10881 / RKU-1).